The primary structure comprises 411 residues: ATP-dependent Clp protease ATP-binding subunit ClpX (411 aa).

The region spanning 1 to 49 (MSDRDIRCSFCGRTQKEVKKLIAGPGVYICDECVKLAYDIIEEDEEEDV) is the ClpX-type ZB domain. Residues cysteine 8, cysteine 11, cysteine 30, and cysteine 33 each contribute to the Zn(2+) site. Position 115–122 (115–122 (PTGVGKTL)) interacts with ATP.

Belongs to the ClpX chaperone family. Component of the ClpX-ClpP complex. Forms a hexameric ring that, in the presence of ATP, binds to fourteen ClpP subunits assembled into a disk-like structure with a central cavity, resembling the structure of eukaryotic proteasomes.

In terms of biological role, ATP-dependent specificity component of the Clp protease. It directs the protease to specific substrates. Can perform chaperone functions in the absence of ClpP. The polypeptide is ATP-dependent Clp protease ATP-binding subunit ClpX (Dictyoglomus thermophilum (strain ATCC 35947 / DSM 3960 / H-6-12)).